Consider the following 869-residue polypeptide: Probable beta-glucosidase F (869 aa).

A signal peptide spans methionine 1–serine 19. Residues asparagine 69, asparagine 77, and asparagine 261 are each glycosylated (N-linked (GlcNAc...) asparagine). Aspartate 289 is a catalytic residue. 5 N-linked (GlcNAc...) asparagine glycosylation sites follow: asparagine 332, asparagine 364, asparagine 399, asparagine 425, and asparagine 478. Positions alanine 678–asparagine 698 are disordered. A compositionally biased stretch (pro residues) spans proline 681–threonine 691. Asparagine 728 carries N-linked (GlcNAc...) asparagine glycosylation.

It belongs to the glycosyl hydrolase 3 family.

Its subcellular location is the secreted. The catalysed reaction is Hydrolysis of terminal, non-reducing beta-D-glucosyl residues with release of beta-D-glucose.. Its pathway is glycan metabolism; cellulose degradation. Beta-glucosidases are one of a number of cellulolytic enzymes involved in the degradation of cellulosic biomass. Catalyzes the last step releasing glucose from the inhibitory cellobiose. This is Probable beta-glucosidase F (bglF) from Neosartorya fischeri (strain ATCC 1020 / DSM 3700 / CBS 544.65 / FGSC A1164 / JCM 1740 / NRRL 181 / WB 181) (Aspergillus fischerianus).